Here is a 337-residue protein sequence, read N- to C-terminus: tRNA N6-adenosine threonylcarbamoyltransferase (337 aa).

Residues His-111 and His-115 each contribute to the Fe cation site. Substrate is bound by residues 134-138 (LVSGG), Asp-167, Gly-180, and Asn-272. Asp-300 provides a ligand contact to Fe cation.

This sequence belongs to the KAE1 / TsaD family. Fe(2+) serves as cofactor.

It localises to the cytoplasm. It carries out the reaction L-threonylcarbamoyladenylate + adenosine(37) in tRNA = N(6)-L-threonylcarbamoyladenosine(37) in tRNA + AMP + H(+). Its function is as follows. Required for the formation of a threonylcarbamoyl group on adenosine at position 37 (t(6)A37) in tRNAs that read codons beginning with adenine. Is involved in the transfer of the threonylcarbamoyl moiety of threonylcarbamoyl-AMP (TC-AMP) to the N6 group of A37, together with TsaE and TsaB. TsaD likely plays a direct catalytic role in this reaction. This chain is tRNA N6-adenosine threonylcarbamoyltransferase, found in Erwinia tasmaniensis (strain DSM 17950 / CFBP 7177 / CIP 109463 / NCPPB 4357 / Et1/99).